A 630-amino-acid chain; its full sequence is Cytochrome B pre-mRNA-processing protein 2 (630 aa).

It is found in the mitochondrion. Functionally, appears to be specifically required for the splicing of the terminal intron (bI5) of the cytochrome b pre-mRNA. Can also stimulates the splicing of the omega intron of the precursor of large ribosomal RNA. The polypeptide is Cytochrome B pre-mRNA-processing protein 2 (CBP2) (Saccharomyces cerevisiae (strain ATCC 204508 / S288c) (Baker's yeast)).